Consider the following 316-residue polypeptide: Ribosomal RNA small subunit methyltransferase A (316 aa).

Residues asparagine 33, valine 35, glycine 60, glutamate 81, aspartate 110, and asparagine 133 each coordinate S-adenosyl-L-methionine.

The protein belongs to the class I-like SAM-binding methyltransferase superfamily. rRNA adenine N(6)-methyltransferase family. RsmA subfamily.

The protein resides in the cytoplasm. The catalysed reaction is adenosine(1518)/adenosine(1519) in 16S rRNA + 4 S-adenosyl-L-methionine = N(6)-dimethyladenosine(1518)/N(6)-dimethyladenosine(1519) in 16S rRNA + 4 S-adenosyl-L-homocysteine + 4 H(+). Its function is as follows. Specifically dimethylates two adjacent adenosines (A1518 and A1519) in the loop of a conserved hairpin near the 3'-end of 16S rRNA in the 30S particle. May play a critical role in biogenesis of 30S subunits. This chain is Ribosomal RNA small subunit methyltransferase A, found in Corynebacterium jeikeium (strain K411).